Here is a 366-residue protein sequence, read N- to C-terminus: Carbamoyl phosphate synthase small chain (366 aa).

The tract at residues 1–171 (MKKRKLILED…KPYVVPGRGL (171 aa)) is CPSase. Ser-46, Gly-220, and Gly-222 together coordinate L-glutamine. Residues 172 to 359 (RVVMVDFGAK…LNLIKASKVK (188 aa)) form the Glutamine amidotransferase type-1 domain. Cys-247 serves as the catalytic Nucleophile. Residues Leu-248, Gln-251, Asn-289, and Tyr-292 each contribute to the L-glutamine site. Residues His-332 and Glu-334 contribute to the active site.

The protein belongs to the CarA family. In terms of assembly, composed of two chains; the small (or glutamine) chain promotes the hydrolysis of glutamine to ammonia, which is used by the large (or ammonia) chain to synthesize carbamoyl phosphate. Tetramer of heterodimers (alpha,beta)4.

The catalysed reaction is hydrogencarbonate + L-glutamine + 2 ATP + H2O = carbamoyl phosphate + L-glutamate + 2 ADP + phosphate + 2 H(+). It carries out the reaction L-glutamine + H2O = L-glutamate + NH4(+). Its pathway is amino-acid biosynthesis; L-arginine biosynthesis; carbamoyl phosphate from bicarbonate: step 1/1. The protein operates within pyrimidine metabolism; UMP biosynthesis via de novo pathway; (S)-dihydroorotate from bicarbonate: step 1/3. In terms of biological role, small subunit of the glutamine-dependent carbamoyl phosphate synthetase (CPSase). CPSase catalyzes the formation of carbamoyl phosphate from the ammonia moiety of glutamine, carbonate, and phosphate donated by ATP, constituting the first step of 2 biosynthetic pathways, one leading to arginine and/or urea and the other to pyrimidine nucleotides. The small subunit (glutamine amidotransferase) binds and cleaves glutamine to supply the large subunit with the substrate ammonia. This is Carbamoyl phosphate synthase small chain from Oceanobacillus iheyensis (strain DSM 14371 / CIP 107618 / JCM 11309 / KCTC 3954 / HTE831).